The following is a 1253-amino-acid chain: Myosin heavy chain 95F (1253 aa).

Residues 3 to 54 form the Myosin N-terminal SH3-like domain; the sequence is EDTQLVWVRDAAEGYIQGRITEIGAKEFEVTPTDRKYPKRTCHFDDIHSSCD. One can recognise a Myosin motor domain in the interval 57 to 766; sequence QDHDDNCELM…KFVEFDRIMR (710 aa). Position 151–158 (151–158) interacts with ATP; that stretch reads GESGAGKT. The tract at residues 647-666 is actin-binding; it reads GELMEKLEQNGTNFIRCIKP. The region spanning 808–837 is the IQ domain; that stretch reads RNKCVLIAQRIARGFLARKQHRPRYQGIGK. Positions 900–1022 form a coiled coil; it reads ANMNKLTVDL…LRLANESNGQ (123 aa). The segment at 1187-1193 is hydrophobic region; it reads PILLVAG. Residues 1233-1253 are disordered; sequence AYKNLGAAKPNGPAAAMQKQQ.

The protein belongs to the TRAFAC class myosin-kinesin ATPase superfamily. Myosin family. As to expression, isoform B is present at a higher level in the head and gonads than in the thoraxes. Isoform 145 kDa is found only in the head. CLIP-190 and jar are coexpressed at several times in development and in a number of tissues, including embryonic axonal neuron processes and posterior pole.

It localises to the cytoplasm. The protein localises to the cytoskeleton. In terms of biological role, myosin is a protein that binds to actin and has ATPase activity that is activated by actin. Together CLIP-190 and jar may coordinate the interaction between the actin and microtubule cytoskeleton. May link endocytic vesicles to microtubules and may be involved in transport in the early embryo and in the dynamic process of dorsal closure. It is believed that its function changes during the life cycle. This is Myosin heavy chain 95F (jar) from Drosophila melanogaster (Fruit fly).